The sequence spans 481 residues: Glutamyl-tRNA(Gln) amidotransferase subunit A (481 aa).

Catalysis depends on charge relay system residues Lys79 and Ser154. Positions 136 to 157 (SAFGATKNPRNPEHVPGGSSGG) are disordered. The Acyl-ester intermediate role is filled by Ser178.

Belongs to the amidase family. GatA subfamily. As to quaternary structure, heterotrimer of A, B and C subunits.

The enzyme catalyses L-glutamyl-tRNA(Gln) + L-glutamine + ATP + H2O = L-glutaminyl-tRNA(Gln) + L-glutamate + ADP + phosphate + H(+). Its function is as follows. Allows the formation of correctly charged Gln-tRNA(Gln) through the transamidation of misacylated Glu-tRNA(Gln) in organisms which lack glutaminyl-tRNA synthetase. The reaction takes place in the presence of glutamine and ATP through an activated gamma-phospho-Glu-tRNA(Gln). This chain is Glutamyl-tRNA(Gln) amidotransferase subunit A, found in Lachnospira eligens (strain ATCC 27750 / DSM 3376 / VPI C15-48 / C15-B4) (Eubacterium eligens).